Consider the following 147-residue polypeptide: Protein SprT-like (147 aa).

Residues 9–142 form the SprT-like domain; the sequence is AKVKEISLTY…CGKCRGKLIL (134 aa). Zn(2+) is bound at residue H65. E66 is a catalytic residue. A Zn(2+)-binding site is contributed by H69.

It belongs to the SprT family. Zn(2+) is required as a cofactor.

It is found in the cytoplasm. The polypeptide is Protein SprT-like (yciD) (Lactococcus lactis subsp. lactis (strain IL1403) (Streptococcus lactis)).